Reading from the N-terminus, the 188-residue chain is Thymidine kinase (188 aa).

17–24 (GPMFAGKT) contributes to the ATP binding site. The active-site Proton acceptor is Glu-92. Phe-121 contacts substrate. Positions 146 and 149 each coordinate Zn(2+). 166 to 170 (LILAG) serves as a coordination point for substrate. Positions 179 and 182 each coordinate Zn(2+).

This sequence belongs to the thymidine kinase family.

It carries out the reaction thymidine + ATP = dTMP + ADP + H(+). Functionally, phosphorylates thymidine. ASFV replicates in the cytoplasm of infected cells and contains genes encoding a number of enzymes needed for DNA synthesis, including thymidine kinase. Important for growth in swine macrophages in vitro and is a virus virulence factor in swine. In African swine fever virus (isolate Tick/South Africa/Pretoriuskop Pr4/1996) (ASFV), this protein is Thymidine kinase.